Consider the following 87-residue polypeptide: NADH-ubiquinone oxidoreductase chain 4L (87 aa).

The next 2 membrane-spanning stretches (helical) occupy residues 22–42 (FLSF…FIIG) and 49–69 (LFLI…SLLV).

The protein belongs to the complex I subunit 4L family.

The protein resides in the mitochondrion membrane. The catalysed reaction is a ubiquinone + NADH + 5 H(+)(in) = a ubiquinol + NAD(+) + 4 H(+)(out). In terms of biological role, core subunit of the mitochondrial membrane respiratory chain NADH dehydrogenase (Complex I) that is believed to belong to the minimal assembly required for catalysis. Complex I functions in the transfer of electrons from NADH to the respiratory chain. The immediate electron acceptor for the enzyme is believed to be ubiquinone. The polypeptide is NADH-ubiquinone oxidoreductase chain 4L (ND4L) (Apis mellifera ligustica (Common honeybee)).